A 360-amino-acid chain; its full sequence is Photosystem II protein D1 (360 aa).

Helical transmembrane passes span 29–46 (YIGWFGVLMIPTLLTATT), 118–133 (HFLLGVCGWIGREWEF), and 142–156 (WISVAFTAPVAAASA). His-118 provides a ligand contact to chlorophyll a. Trp-126 contributes to the pheophytin a binding site. [CaMn4O5] cluster is bound by residues Asp-170 and Glu-189. Residues 197–218 (FHQLGVAGVFGGSLFSAMHGSL) form a helical membrane-spanning segment. Residue His-198 participates in chlorophyll a binding. Residues His-215 and 264 to 265 (SF) contribute to the a quinone site. His-215 is a Fe cation binding site. His-272 lines the Fe cation pocket. Residues 274–288 (FLGLWPVVGIWFTAL) form a helical membrane-spanning segment. [CaMn4O5] cluster-binding residues include His-332, Glu-333, Asp-342, and Ala-344. The propeptide occupies 345–360 (SGESLPVALTAPAVIG).

It belongs to the reaction center PufL/M/PsbA/D family. In terms of assembly, PSII is composed of 1 copy each of membrane proteins PsbA, PsbB, PsbC, PsbD, PsbE, PsbF, PsbH, PsbI, PsbJ, PsbK, PsbL, PsbM, PsbT, PsbX, PsbY, PsbZ, Psb30/Ycf12, at least 3 peripheral proteins of the oxygen-evolving complex and a large number of cofactors. It forms dimeric complexes. The cofactor is The D1/D2 heterodimer binds P680, chlorophylls that are the primary electron donor of PSII, and subsequent electron acceptors. It shares a non-heme iron and each subunit binds pheophytin, quinone, additional chlorophylls, carotenoids and lipids. D1 provides most of the ligands for the Mn4-Ca-O5 cluster of the oxygen-evolving complex (OEC). There is also a Cl(-1) ion associated with D1 and D2, which is required for oxygen evolution. The PSII complex binds additional chlorophylls, carotenoids and specific lipids.. In terms of processing, tyr-161 forms a radical intermediate that is referred to as redox-active TyrZ, YZ or Y-Z. Post-translationally, C-terminally processed by CTPA; processing is essential to allow assembly of the oxygen-evolving complex and thus photosynthetic growth.

It localises to the plastid. The protein localises to the chloroplast thylakoid membrane. The catalysed reaction is 2 a plastoquinone + 4 hnu + 2 H2O = 2 a plastoquinol + O2. Photosystem II (PSII) is a light-driven water:plastoquinone oxidoreductase that uses light energy to abstract electrons from H(2)O, generating O(2) and a proton gradient subsequently used for ATP formation. It consists of a core antenna complex that captures photons, and an electron transfer chain that converts photonic excitation into a charge separation. The D1/D2 (PsbA/PsbD) reaction center heterodimer binds P680, the primary electron donor of PSII as well as several subsequent electron acceptors. The chain is Photosystem II protein D1 from Guillardia theta (Cryptophyte).